Reading from the N-terminus, the 271-residue chain is DNA-directed RNA polymerase subunit Rpo3 (271 aa).

It belongs to the archaeal Rpo3/eukaryotic RPB3 RNA polymerase subunit family. Part of the RNA polymerase complex.

The protein localises to the cytoplasm. The catalysed reaction is RNA(n) + a ribonucleoside 5'-triphosphate = RNA(n+1) + diphosphate. Its function is as follows. DNA-dependent RNA polymerase (RNAP) catalyzes the transcription of DNA into RNA using the four ribonucleoside triphosphates as substrates. The protein is DNA-directed RNA polymerase subunit Rpo3 of Thermoplasma volcanium (strain ATCC 51530 / DSM 4299 / JCM 9571 / NBRC 15438 / GSS1).